Consider the following 708-residue polypeptide: MTTESQAAERLAFLAAEIARHNALYHGEDAPEISDADYDALMRENAALEAEYPHLVRADSPSKLVGAAPSGHLAKVAHAQPMLSLDNAFADEDVVDFVGRVRRYLSLGAEEPVALTAEPKIDGLSCSLRYEKGVLVLAATRGDGTTGEDVTANVRTIDDIPERLRGGDLLSSPPDVFEIRGEVYMAKADFAALNARLLAEAEDPAKARQFANPRNAAAGSLRQKDPGVTASRPLRFLAHGWGEVSALPADTQKGVMDAIAAWGLPVSDDFVRVDGAAQALSHYRAIEAKRADLPFDIDGVVYKVDRLDWQKRLGFVARAPRWAIAHKFPAEKAQTLLKDIDIQVGRTGKLTPVARLEPVTVGGVVVTNATLHNADEIGRLDVHPGDRVVVQRAGDVIPQIVENLSRDETRDPWPFPQTCPECGSAAEREPGEVDYRCTGGLICPAQRVERLRHFVSRHALDIEGLGLTHIESFFRDGLVQSPADIFRLTKDILLTRERWAEVSAGNLIAAIDAKRHPPLDRFLFALGIRHVGEVTARDLARRYRSWEGLKAMIDRTIEARDAAVQAIGETDEKFAARTAKELAAIVETPGVGPEVALALVDFFAEPHNADAVADLLSQLQPADVIHETRASEVSGKTVVFTGTLETMSRDEAKAQAEALGAKVAGSVSAKTDLVVAGPGAGSKLKKASDLGIAVTDEAGWAKIVADAQ.

Residues 35 to 39, 84 to 85, and Glu-118 each bind NAD(+); these read DADYD and SL. The N6-AMP-lysine intermediate role is filled by Lys-120. Arg-141, Glu-182, Lys-303, and Lys-327 together coordinate NAD(+). Zn(2+) is bound by residues Cys-419, Cys-422, Cys-437, and Cys-443. Residues 628–708 enclose the BRCT domain; that stretch reads TRASEVSGKT…GWAKIVADAQ (81 aa).

The protein belongs to the NAD-dependent DNA ligase family. LigA subfamily. Mg(2+) serves as cofactor. The cofactor is Mn(2+).

It catalyses the reaction NAD(+) + (deoxyribonucleotide)n-3'-hydroxyl + 5'-phospho-(deoxyribonucleotide)m = (deoxyribonucleotide)n+m + AMP + beta-nicotinamide D-nucleotide.. Its function is as follows. DNA ligase that catalyzes the formation of phosphodiester linkages between 5'-phosphoryl and 3'-hydroxyl groups in double-stranded DNA using NAD as a coenzyme and as the energy source for the reaction. It is essential for DNA replication and repair of damaged DNA. The polypeptide is DNA ligase (Rhizorhabdus wittichii (strain DSM 6014 / CCUG 31198 / JCM 15750 / NBRC 105917 / EY 4224 / RW1) (Sphingomonas wittichii)).